The primary structure comprises 374 residues: Serpin B8 (374 aa).

It belongs to the serpin family. Ov-serpin subfamily.

It is found in the cytoplasm. Functionally, has an important role in epithelial desmosome-mediated cell-cell adhesion. The sequence is that of Serpin B8 (SERPINB8) from Homo sapiens (Human).